The chain runs to 75 residues: Small, acid-soluble spore protein Tlp (75 aa).

The protein belongs to the Tlp family.

It is found in the spore core. The polypeptide is Small, acid-soluble spore protein Tlp (Geobacillus kaustophilus (strain HTA426)).